Here is a 121-residue protein sequence, read N- to C-terminus: Protein CHLORORESPIRATORY REDUCTION 42, chloroplastic (121 aa).

In terms of assembly, biogenesis factor component of the plastidial NDH subcomplex A.

It localises to the plastid. Its subcellular location is the chloroplast. The protein localises to the chloroplast stroma. Its function is as follows. Required for both formation and activity of the chloroplast NAD(P)H dehydrogenase (NDH) complex of the photosynthetic electron transport chain. Functions in assembly or stabilization of the NDH complex; probably involved, together with CRR1 and CRR6, in the incorporation of NdhJ, NdhM, NdhK and NdhI into the NDH subcomplex A assembly intermediate (NAI500) to produce the complex NAI400. The sequence is that of Protein CHLORORESPIRATORY REDUCTION 42, chloroplastic from Arabidopsis thaliana (Mouse-ear cress).